A 169-amino-acid polypeptide reads, in one-letter code: Endoribonuclease YbeY (169 aa).

The Zn(2+) site is built by His-117, His-121, and His-127.

This sequence belongs to the endoribonuclease YbeY family. Zn(2+) serves as cofactor.

Its subcellular location is the cytoplasm. Single strand-specific metallo-endoribonuclease involved in late-stage 70S ribosome quality control and in maturation of the 3' terminus of the 16S rRNA. The protein is Endoribonuclease YbeY of Mesoplasma florum (strain ATCC 33453 / NBRC 100688 / NCTC 11704 / L1) (Acholeplasma florum).